The following is a 275-amino-acid chain: NH(3)-dependent NAD(+) synthetase (275 aa).

Residue 47-54 participates in ATP binding; that stretch reads GMSGGQDS. Asp-53 lines the Mg(2+) pocket. Arg-141 serves as a coordination point for deamido-NAD(+). Thr-161 is a binding site for ATP. A Mg(2+)-binding site is contributed by Glu-166. The deamido-NAD(+) site is built by Lys-174 and Asp-181. Residues Lys-190 and Thr-212 each coordinate ATP. 261–262 lines the deamido-NAD(+) pocket; the sequence is HK.

This sequence belongs to the NAD synthetase family. As to quaternary structure, homodimer.

The catalysed reaction is deamido-NAD(+) + NH4(+) + ATP = AMP + diphosphate + NAD(+) + H(+). It functions in the pathway cofactor biosynthesis; NAD(+) biosynthesis; NAD(+) from deamido-NAD(+) (ammonia route): step 1/1. In terms of biological role, catalyzes the ATP-dependent amidation of deamido-NAD to form NAD. Uses ammonia as a nitrogen source. In Oceanobacillus iheyensis (strain DSM 14371 / CIP 107618 / JCM 11309 / KCTC 3954 / HTE831), this protein is NH(3)-dependent NAD(+) synthetase.